A 704-amino-acid polypeptide reads, in one-letter code: Lebercilin (704 aa).

Residues 1–14 show a composition bias toward basic and acidic residues; it reads MGERARSPDIEQGK. Positions 1 to 80 are disordered; it reads MGERARSPDI…VSPKAVPSKK (80 aa). S7 carries the post-translational modification Phosphoserine. A compositionally biased stretch (low complexity) spans 25–40; sequence SSDLGSSPQSSGPSSP. S48 carries the post-translational modification Phosphoserine. The span at 49 to 63 shows a compositional bias: basic and acidic residues; it reads TREKNPKRHLSDNQV. Residues 105–300 adopt a coiled-coil conformation; it reads KRVLSARLLK…KEKELDIKNI (196 aa). Disordered regions lie at residues 389-417 and 476-661; these read QEGK…AREE and ELQD…GDEE. Residues 404–417 are compositionally biased toward basic and acidic residues; that stretch reads QEARKPESEWAREE. Positions 448-479 form a coiled coil; it reads AQSVDKFEDEAERLKTEMLLAKLNEINKELQD. Residues 496–505 are compositionally biased toward basic and acidic residues; the sequence is SKLHSPDRST. Polar residues predominate over residues 570–591; it reads GKSNPPSQKSSLLDFQSNSSES. Residues 592-608 show a composition bias toward basic and acidic residues; sequence PSKDSLDLMSRKEKKAT. A compositionally biased stretch (low complexity) spans 617 to 627; the sequence is SASNTSVSSKS.

The protein belongs to the LCA5 family. Interacts with NINL. Interacts with OFD1. Interacts with FAM161A. Interacts with components of the IFT complex B. As to expression, detected in several tissues.

Its subcellular location is the cytoplasm. The protein localises to the cytoskeleton. The protein resides in the cilium axoneme. It is found in the cilium basal body. It localises to the cell projection. Its subcellular location is the cilium. In terms of biological role, involved in intraflagellar protein (IFT) transport in photoreceptor cilia. In Mus musculus (Mouse), this protein is Lebercilin (Lca5).